Consider the following 638-residue polypeptide: Epithelial sodium channel subunit beta (638 aa).

The Cytoplasmic portion of the chain corresponds to 1–50 (MPVKKYLLKCLHRLQKGPGYTYKELLVWYCNNTNTHGPKRIICEGPKKKA). Residues 51-71 (MWFLLTLLFACLVCWQWGVFI) traverse the membrane as a helical segment. Topologically, residues 72–530 (QTYLSWEVSV…GGQFGFWMGG (459 aa)) are extracellular. Cystine bridges form between cysteine 98–cysteine 270, cysteine 182–cysteine 187, cysteine 194–cysteine 201, cysteine 247–cysteine 254, cysteine 359–cysteine 446, cysteine 384–cysteine 442, cysteine 388–cysteine 438, cysteine 397–cysteine 424, and cysteine 399–cysteine 413. N-linked (GlcNAc...) asparagine glycosylation is found at asparagine 135 and asparagine 141. Residue asparagine 205 is glycosylated (N-linked (GlcNAc...) asparagine). A helical transmembrane segment spans residues 531–551 (SVLCLIEFGEIIIDFIWITII). Topologically, residues 552 to 638 (KLVASCKGLR…MESDSEVEAI (87 aa)) are cytoplasmic. The tract at residues 594 to 620 (SCRPHGEVYPDQQTLPIPGTPPPNYDS) is disordered. The PY motif; recruits WW domain-containing proteins and is thereby required for ubiquitination and inhibition of the channel by NEDD4 and NEDD4L motif lies at 614 to 618 (PPPNY). Residues serine 631 and serine 633 each carry the phosphoserine modification.

It belongs to the amiloride-sensitive sodium channel (TC 1.A.6) family. SCNN1B subfamily. In terms of assembly, component of the heterotrimeric epithelial sodium channel (ENaC) composed of an alpha/SCNN1A, a beta/SCNN1B and a gamma/SCNN1G subunit. Interacts with WWP1 (via WW domains). Interacts with WWP2 (via WW domains); inhibits the channel. Interacts with the full-length immature form of PCSK9 (pro-PCSK9). Interacts (N-glycosylated) with BPIFA1; the interaction is direct and inhibits the proteolytic processing of SCNN1A and SCNN1G and the activation of ENaC. Ubiquitinated. Can be ubiquitinated at multiple sites and undergo monoubiquitination and polyubiquitination. Ubiquitination by NEDD4 or NEDD4L inhibits the ENaC channel through endocytosis, intracellular retention and degradation of its individual subunits. However, some studies could not confirm the ubiquitination of this subunit of the ENaC. In terms of processing, N-glycosylated. N-glycosylation is required for interaction with BPIFA1. Post-translationally, phosphorylated on serine and threonine residues. Aldosterone and insulin increase the basal level of phosphorylation. Lung and kidney.

The protein resides in the apical cell membrane. The protein localises to the cytoplasmic vesicle membrane. It catalyses the reaction Na(+)(in) = Na(+)(out). With respect to regulation, originally identified and characterized by its inhibition by the diuretic drug amiloride. Its function is as follows. This is one of the three pore-forming subunits of the heterotrimeric epithelial sodium channel (ENaC), a critical regulator of sodium balance and fluid homeostasis. ENaC operates in epithelial tissues, where it mediates the electrodiffusion of sodium ions from extracellular fluid through the apical membrane of cells, with water following osmotically. It plays a key role in maintaining sodium homeostasis through electrogenic sodium reabsorption in the kidneys. This subunit is not essential for ENaC function in airway surface liquid homeostasis and proper mucus clearance. The polypeptide is Epithelial sodium channel subunit beta (Mus musculus (Mouse)).